The chain runs to 465 residues: UDP-glycosyltransferase TURAN (465 aa).

Residues 1–75 (MGKRGRACVV…FIQYFPKILY (75 aa)) are Cytoplasmic-facing. Residues 76–96 (PVTLLLKAFIQFTMLLWFLFV) traverse the membrane as a helical segment. Residues 97–465 (KVPAPDIFLV…TQVVSQIADS (369 aa)) lie on the Lumenal side of the membrane. The N-linked (GlcNAc...) asparagine glycan is linked to Asn-238.

It belongs to the glycosyltransferase group 1 family. Glycosyltransferase 33 subfamily.

The protein resides in the endoplasmic reticulum membrane. It functions in the pathway protein modification; protein glycosylation. Its function is as follows. Required for pollen tube (PT) growth and integrity by affecting the stability of the pollen-specific ANX1 and ANX2 proteins. Involved in protein N-glycosylation in the endoplasmic reticulum (ER), especially in the female gametophyte. Mediates PT reception in synergids through protein glycosylation. The sequence is that of UDP-glycosyltransferase TURAN from Arabidopsis thaliana (Mouse-ear cress).